The following is a 145-amino-acid chain: Lysozyme C (145 aa).

An N-terminal signal peptide occupies residues 1-19; it reads MLFFGFLLAFLSAVPGTEG. Residues 20-145 enclose the C-type lysozyme domain; sequence EIIPRCELVK…RDLSSYVKGC (126 aa). Intrachain disulfides connect Cys25–Cys145, Cys49–Cys133, Cys82–Cys98, and Cys94–Cys112. Catalysis depends on residues Glu54 and Asp70.

It belongs to the glycosyl hydrolase 22 family. As to quaternary structure, monomer.

The protein localises to the secreted. The catalysed reaction is Hydrolysis of (1-&gt;4)-beta-linkages between N-acetylmuramic acid and N-acetyl-D-glucosamine residues in a peptidoglycan and between N-acetyl-D-glucosamine residues in chitodextrins.. In terms of biological role, lysozymes have primarily a bacteriolytic function; those in tissues and body fluids are associated with the monocyte-macrophage system and enhance the activity of immunoagents. This Opisthocomus hoazin (Hoatzin) protein is Lysozyme C (LYZ).